Reading from the N-terminus, the 180-residue chain is ADP-ribosylation factor 5 (180 aa).

G2 carries the N-myristoyl glycine lipid modification. Residues 24-31, 67-71, and 126-129 contribute to the GTP site; these read GLDAAGKT, DVGGQ, and NKQD.

Belongs to the small GTPase superfamily. Arf family. Interacts (when activated) with GGA1, GGA2 and GGA3; the interaction is required for proper subcellular location of GGA1, GGA2 and GGA3. Binds ASAP2. Interacts with NCS1/FREQ at the Golgi complex. Interacts with RAB11FIP3 and RAB11FIP4.

It localises to the golgi apparatus. Its subcellular location is the cytoplasm. It is found in the perinuclear region. The protein localises to the membrane. The protein resides in the trans-Golgi network membrane. In terms of biological role, GTP-binding protein involved in protein trafficking; may modulate vesicle budding and uncoating within the Golgi apparatus. (Microbial infection) Functions as an allosteric activator of the cholera toxin catalytic subunit, an ADP-ribosyltransferase. This is ADP-ribosylation factor 5 (ARF5) from Homo sapiens (Human).